We begin with the raw amino-acid sequence, 258 residues long: Probable parvulin-type peptidyl-prolyl cis-trans isomerase (258 aa).

The signal sequence occupies residues 1–19; it reads MKRIAMLAAACVIAVPAFA. One can recognise a PpiC domain in the interval 127 to 219; it reads KMEYKVRHIL…FGWHVIQVDD (93 aa). The segment covering 158 to 175 has biased composition (basic and acidic residues); the sequence is DDLAKKNSKDPGSAERGG. Residues 158 to 178 are disordered; it reads DDLAKKNSKDPGSAERGGDLG.

It belongs to the PpiC/parvulin rotamase family.

It catalyses the reaction [protein]-peptidylproline (omega=180) = [protein]-peptidylproline (omega=0). The sequence is that of Probable parvulin-type peptidyl-prolyl cis-trans isomerase from Bordetella bronchiseptica (strain ATCC BAA-588 / NCTC 13252 / RB50) (Alcaligenes bronchisepticus).